Consider the following 946-residue polypeptide: Bifunctional glutamine synthetase adenylyltransferase/adenylyl-removing enzyme (946 aa).

Residues 1-440 form an adenylyl removase region; sequence MKPLSSPLQQ…VFNELIGDDE (440 aa). Residues 449 to 946 form an adenylyl transferase region; that stretch reads SEQWRELWQD…ASWQKWLVEE (498 aa).

This sequence belongs to the GlnE family. The cofactor is Mg(2+).

The catalysed reaction is [glutamine synthetase]-O(4)-(5'-adenylyl)-L-tyrosine + phosphate = [glutamine synthetase]-L-tyrosine + ADP. It catalyses the reaction [glutamine synthetase]-L-tyrosine + ATP = [glutamine synthetase]-O(4)-(5'-adenylyl)-L-tyrosine + diphosphate. In terms of biological role, involved in the regulation of glutamine synthetase GlnA, a key enzyme in the process to assimilate ammonia. When cellular nitrogen levels are high, the C-terminal adenylyl transferase (AT) inactivates GlnA by covalent transfer of an adenylyl group from ATP to specific tyrosine residue of GlnA, thus reducing its activity. Conversely, when nitrogen levels are low, the N-terminal adenylyl removase (AR) activates GlnA by removing the adenylyl group by phosphorolysis, increasing its activity. The regulatory region of GlnE binds the signal transduction protein PII (GlnB) which indicates the nitrogen status of the cell. This is Bifunctional glutamine synthetase adenylyltransferase/adenylyl-removing enzyme from Escherichia coli O8 (strain IAI1).